The chain runs to 283 residues: Thymidylate synthase (283 aa).

Arg-22 contacts dUMP. The active-site Nucleophile is the Cys-160. DUMP is bound by residues 180–183, Asn-191, and 221–223; these read RSCD and HIY. (6R)-5,10-methylene-5,6,7,8-tetrahydrofolate is bound at residue Asp-183. Ser-282 contacts (6R)-5,10-methylene-5,6,7,8-tetrahydrofolate.

It belongs to the thymidylate synthase family. Bacterial-type ThyA subfamily. In terms of assembly, homodimer.

It is found in the cytoplasm. The enzyme catalyses dUMP + (6R)-5,10-methylene-5,6,7,8-tetrahydrofolate = 7,8-dihydrofolate + dTMP. It participates in pyrimidine metabolism; dTTP biosynthesis. In terms of biological role, catalyzes the reductive methylation of 2'-deoxyuridine-5'-monophosphate (dUMP) to 2'-deoxythymidine-5'-monophosphate (dTMP) while utilizing 5,10-methylenetetrahydrofolate (mTHF) as the methyl donor and reductant in the reaction, yielding dihydrofolate (DHF) as a by-product. This enzymatic reaction provides an intracellular de novo source of dTMP, an essential precursor for DNA biosynthesis. The sequence is that of Thymidylate synthase from Photobacterium profundum (strain SS9).